Here is a 390-residue protein sequence, read N- to C-terminus: GTPase Obg (390 aa).

The 159-residue stretch at 1 to 159 (MKFVDEASIL…RELLLELMLL (159 aa)) folds into the Obg domain. The interval 127–147 (NTRFKSSVNRTPRQKTNGTPG) is disordered. The span at 129-145 (RFKSSVNRTPRQKTNGT) shows a compositional bias: polar residues. The OBG-type G domain maps to 160–333 (ADVGMLGMPN…LCWDVMTFII (174 aa)). GTP contacts are provided by residues 166 to 173 (GMPNAGKS), 191 to 195 (FTTLV), 213 to 216 (DIPG), 283 to 286 (NKID), and 314 to 316 (SAA). Serine 173 and threonine 193 together coordinate Mg(2+).

The protein belongs to the TRAFAC class OBG-HflX-like GTPase superfamily. OBG GTPase family. In terms of assembly, monomer. Requires Mg(2+) as cofactor.

It localises to the cytoplasm. Functionally, an essential GTPase which binds GTP, GDP and possibly (p)ppGpp with moderate affinity, with high nucleotide exchange rates and a fairly low GTP hydrolysis rate. Plays a role in control of the cell cycle, stress response, ribosome biogenesis and in those bacteria that undergo differentiation, in morphogenesis control. This chain is GTPase Obg, found in Escherichia coli O157:H7.